We begin with the raw amino-acid sequence, 672 residues long: Ubiquitin carboxyl-terminal hydrolase 19 (672 aa).

A helical transmembrane segment spans residues 11–31 (NSFTQLILTLFFVSIGLLYFV). Positions 64, 67, 75, 78, 84, 88, 97, and 101 each coordinate Zn(2+). Residues 64–101 (CSVCGKATTKKCSRCKSVRYCSAACQTSDWKSGHKLKC) form an MYND-type zinc finger. Positions 174-480 (CGLTNCGNSC…RAYMLLYSRV (307 aa)) constitute a USP domain. C183 functions as the Nucleophile in the catalytic mechanism. H439 (proton acceptor) is an active-site residue. The interval 484 to 672 (PSNLRSEESQ…HSDTEMIDAQ (189 aa)) is disordered. Residues 488–499 (RSEESQDEKKTD) show a composition bias toward basic and acidic residues. Over residues 500–527 (TLNTESNQDGSVESSGVGTNDTSVSSLC) the composition is skewed to polar residues. 2 stretches are compositionally biased toward basic and acidic residues: residues 533 to 543 (HSEDPEYEKES) and 553 to 594 (EEGK…KEDP). Positions 606–615 (LDITTPSPSA) are enriched in polar residues. Residues 623 to 666 (ENERSDTESKPLEKEHSDTESNKPLEKEHLDSESKPLEKEHSDT) show a composition bias toward basic and acidic residues.

The protein belongs to the peptidase C19 family.

It localises to the membrane. It carries out the reaction Thiol-dependent hydrolysis of ester, thioester, amide, peptide and isopeptide bonds formed by the C-terminal Gly of ubiquitin (a 76-residue protein attached to proteins as an intracellular targeting signal).. In terms of biological role, recognizes and hydrolyzes the peptide bond at the C-terminal Gly of ubiquitin. Involved in the processing of poly-ubiquitin precursors as well as that of ubiquitinated proteins. The chain is Ubiquitin carboxyl-terminal hydrolase 19 (UBP19) from Arabidopsis thaliana (Mouse-ear cress).